Consider the following 332-residue polypeptide: MKINLDRTSSGFCIGVQGTIHVAEEKLAQSGELYCLGDVVHNEVEVKRLEALGMETIDIPAFEELRNAEVLIRAHGEPPSTYETARKNNLAITDTTCPVVAKLQRTAKMLHQLGYQVVIYGKKVHPEVIGINGQCDDEGVVIKHPDLSDPEEIAPLDLSRKTALISQTTMDVPGFYELKRNLEKLFAEHGHRNPGTQSGEWMAVRDIDITAEKTGALAMPKLVFKDTICRQVSSRNGKLRDFALANDCIVFAAGRKSSNGQVLYSICKDANPHSYFIEDVDEIRPEWFVGENGKPVESVGICGATSTPMWLLEKVANYIDKTFGDGSSNPNA.

Cys-13 contacts [4Fe-4S] cluster. Residues His-41 and His-75 each contribute to the (2E)-4-hydroxy-3-methylbut-2-enyl diphosphate site. Dimethylallyl diphosphate is bound by residues His-41 and His-75. The isopentenyl diphosphate site is built by His-41 and His-75. Cys-97 serves as a coordination point for [4Fe-4S] cluster. (2E)-4-hydroxy-3-methylbut-2-enyl diphosphate is bound at residue His-125. His-125 lines the dimethylallyl diphosphate pocket. An isopentenyl diphosphate-binding site is contributed by His-125. Glu-127 functions as the Proton donor in the catalytic mechanism. Thr-168 provides a ligand contact to (2E)-4-hydroxy-3-methylbut-2-enyl diphosphate. Cys-229 serves as a coordination point for [4Fe-4S] cluster. The (2E)-4-hydroxy-3-methylbut-2-enyl diphosphate site is built by Ser-257, Ser-258, Asn-259, and Ser-306. 4 residues coordinate dimethylallyl diphosphate: Ser-257, Ser-258, Asn-259, and Ser-306. Positions 257, 258, 259, and 306 each coordinate isopentenyl diphosphate.

It belongs to the IspH family. [4Fe-4S] cluster is required as a cofactor.

It carries out the reaction isopentenyl diphosphate + 2 oxidized [2Fe-2S]-[ferredoxin] + H2O = (2E)-4-hydroxy-3-methylbut-2-enyl diphosphate + 2 reduced [2Fe-2S]-[ferredoxin] + 2 H(+). It catalyses the reaction dimethylallyl diphosphate + 2 oxidized [2Fe-2S]-[ferredoxin] + H2O = (2E)-4-hydroxy-3-methylbut-2-enyl diphosphate + 2 reduced [2Fe-2S]-[ferredoxin] + 2 H(+). It participates in isoprenoid biosynthesis; dimethylallyl diphosphate biosynthesis; dimethylallyl diphosphate from (2E)-4-hydroxy-3-methylbutenyl diphosphate: step 1/1. Its pathway is isoprenoid biosynthesis; isopentenyl diphosphate biosynthesis via DXP pathway; isopentenyl diphosphate from 1-deoxy-D-xylulose 5-phosphate: step 6/6. Catalyzes the conversion of 1-hydroxy-2-methyl-2-(E)-butenyl 4-diphosphate (HMBPP) into a mixture of isopentenyl diphosphate (IPP) and dimethylallyl diphosphate (DMAPP). Acts in the terminal step of the DOXP/MEP pathway for isoprenoid precursor biosynthesis. The chain is 4-hydroxy-3-methylbut-2-enyl diphosphate reductase from Chlorobaculum tepidum (strain ATCC 49652 / DSM 12025 / NBRC 103806 / TLS) (Chlorobium tepidum).